The primary structure comprises 341 residues: uncharacterized protein (341 aa).

WD repeat units lie at residues 19–59, 106–145, 252–293, and 303–341; these read SLGS…QVHT, GHTD…RCLG, PFSN…HHKG, and VSQS…ALTS.

It is found in the cytoplasm. It localises to the nucleus. This is an uncharacterized protein from Schizosaccharomyces pombe (strain 972 / ATCC 24843) (Fission yeast).